We begin with the raw amino-acid sequence, 141 residues long: Large ribosomal subunit protein uL16 (141 aa).

The tract at residues 1–23 (MLMPKRTKWRKQQKGRNRGKSFR) is disordered.

This sequence belongs to the universal ribosomal protein uL16 family. Part of the 50S ribosomal subunit.

In terms of biological role, binds 23S rRNA and is also seen to make contacts with the A and possibly P site tRNAs. In Sulfurovum sp. (strain NBC37-1), this protein is Large ribosomal subunit protein uL16.